Consider the following 270-residue polypeptide: SAMP-activating enzyme E1 (270 aa).

ATP is bound by residues Gly42, Asp63, 70-74 (SNLQR), and Lys87. A Glycyl lysine isopeptide (Lys-Gly) (interchain with G-Cter in SAMP2) cross-link involves residue Lys113. ATP is bound at residue 131-132 (DN). Positions 171 and 174 each coordinate Zn(2+). Cys188 (glycyl thioester intermediate) is an active-site residue. Residues Cys245 and Cys248 each contribute to the Zn(2+) site.

It belongs to the HesA/MoeB/ThiF family. In terms of assembly, interacts with NcsA. Zn(2+) serves as cofactor. Sampylated at Lys-113 with the archaeal ubiquitin-like protein SAMP2. Also sampylated with SAMP1.

It carries out the reaction [small archaeal modifier protein]-C-terminal Gly-Gly + ATP + H(+) = [small archaeal modifier protein]-C-terminal Gly-Gly-AMP + diphosphate. Functionally, likely activates multiple ubiquitin-like SAMPs for protein conjugation as well as for sulfur transfer, via ATP-dependent adenylation at their C-terminus. In fact, it is required for the formation of all three SAMP1-, SAMP2- and SAMP3-protein conjugates, and for molybdenum cofactor (MoCo) biosynthesis and thiolation of tRNAs. The polypeptide is SAMP-activating enzyme E1 (ubaA) (Haloferax volcanii (strain ATCC 29605 / DSM 3757 / JCM 8879 / NBRC 14742 / NCIMB 2012 / VKM B-1768 / DS2) (Halobacterium volcanii)).